Consider the following 276-residue polypeptide: Melibiose/raffinose/stachyose import permease protein MelC (276 aa).

The next 6 helical transmembrane spans lie at Ile11 to Leu31, Ile74 to Leu94, Ala104 to Leu124, Ile139 to Phe159, Ile186 to Ile206, and Leu240 to Ala260. The ABC transmembrane type-1 domain maps to Phe69 to Leu261.

It belongs to the binding-protein-dependent transport system permease family. The complex is composed of two ATP-binding proteins (MsmX), two transmembrane proteins (MelC and MelD) and a solute-binding protein (MelE).

The protein resides in the cell membrane. Functionally, part of the ABC transporter complex MelEDC-MsmX involved in melibiose, raffinose and stachyose import. Probably responsible for the translocation of the substrate across the membrane. This Bacillus subtilis (strain 168) protein is Melibiose/raffinose/stachyose import permease protein MelC.